We begin with the raw amino-acid sequence, 196 residues long: Pyridoxal 5'-phosphate synthase subunit PdxT (196 aa).

47–49 is an L-glutamine binding site; it reads GES. The active-site Nucleophile is Cys79. Residues Arg106 and 134-135 each bind L-glutamine; that span reads IR. Active-site charge relay system residues include His170 and Glu172.

The protein belongs to the glutaminase PdxT/SNO family. In the presence of PdxS, forms a dodecamer of heterodimers. Only shows activity in the heterodimer.

It catalyses the reaction aldehydo-D-ribose 5-phosphate + D-glyceraldehyde 3-phosphate + L-glutamine = pyridoxal 5'-phosphate + L-glutamate + phosphate + 3 H2O + H(+). The catalysed reaction is L-glutamine + H2O = L-glutamate + NH4(+). The protein operates within cofactor biosynthesis; pyridoxal 5'-phosphate biosynthesis. Catalyzes the hydrolysis of glutamine to glutamate and ammonia as part of the biosynthesis of pyridoxal 5'-phosphate. The resulting ammonia molecule is channeled to the active site of PdxS. The chain is Pyridoxal 5'-phosphate synthase subunit PdxT from Bacillus anthracis (strain A0248).